We begin with the raw amino-acid sequence, 662 residues long: Acetyl-coenzyme A synthetase (662 aa).

CoA contacts are provided by residues 197–200 (RKGK) and threonine 317. ATP-binding positions include 393–395 (GEP), 417–422 (DTWWQT), aspartate 510, and arginine 525. Serine 533 serves as a coordination point for CoA. ATP is bound at residue arginine 536. Histidine 549 and valine 552 together coordinate Mg(2+). Lysine 623 is subject to N6-acetyllysine.

This sequence belongs to the ATP-dependent AMP-binding enzyme family. Mg(2+) is required as a cofactor. Post-translationally, acetylated. Deacetylation by the SIR2-homolog deacetylase activates the enzyme.

The enzyme catalyses acetate + ATP + CoA = acetyl-CoA + AMP + diphosphate. Catalyzes the conversion of acetate into acetyl-CoA (AcCoA), an essential intermediate at the junction of anabolic and catabolic pathways. AcsA undergoes a two-step reaction. In the first half reaction, AcsA combines acetate with ATP to form acetyl-adenylate (AcAMP) intermediate. In the second half reaction, it can then transfer the acetyl group from AcAMP to the sulfhydryl group of CoA, forming the product AcCoA. The polypeptide is Acetyl-coenzyme A synthetase (Helicobacter acinonychis (strain Sheeba)).